Reading from the N-terminus, the 447-residue chain is Cobyrinate a,c-diamide synthase (447 aa).

One can recognise a GATase cobBQ-type domain in the interval 252-439; that stretch reads KIAIAFDESF…AHQHAVGNPY (188 aa). Cys331 serves as the catalytic Nucleophile.

It belongs to the CobB/CbiA family. Mg(2+) is required as a cofactor.

The enzyme catalyses cob(II)yrinate + 2 L-glutamine + 2 ATP + 2 H2O = cob(II)yrinate a,c diamide + 2 L-glutamate + 2 ADP + 2 phosphate + 2 H(+). It carries out the reaction Ni-sirohydrochlorin + 2 L-glutamine + 2 ATP + 2 H2O = Ni-sirohydrochlorin a,c-diamide + 2 L-glutamate + 2 ADP + 2 phosphate + 2 H(+). The protein operates within cofactor biosynthesis; adenosylcobalamin biosynthesis; cob(II)yrinate a,c-diamide from sirohydrochlorin (anaerobic route): step 10/10. In terms of biological role, catalyzes the ATP-dependent amidation of the two carboxylate groups at positions a and c of cobyrinate, using either L-glutamine or ammonia as the nitrogen source. Involved in the biosynthesis of the unique nickel-containing tetrapyrrole coenzyme F430, the prosthetic group of methyl-coenzyme M reductase (MCR), which plays a key role in methanogenesis and anaerobic methane oxidation. Catalyzes the ATP-dependent amidation of the two carboxylate groups at positions a and c of Ni-sirohydrochlorin, using L-glutamine or ammonia as the nitrogen source. The polypeptide is Cobyrinate a,c-diamide synthase (Methanococcus vannielii (strain ATCC 35089 / DSM 1224 / JCM 13029 / OCM 148 / SB)).